A 686-amino-acid chain; its full sequence is Thymidine kinase (686 aa).

Over residues 1–14 (MASNSHNNYNTPRR) the composition is skewed to polar residues. 2 disordered regions span residues 1–21 (MASNSHNNYNTPRRQNYDVPK) and 64–85 (NPGLKPRGLVRPRQDADNPSSD). Position 243–250 (243–250 (GCMAAGKT)) interacts with ATP. Catalysis depends on glutamate 270, which acts as the Proton acceptor. Residue glutamine 308 participates in substrate binding. Arginine 398 is a binding site for ATP. Arginine 404 provides a ligand contact to substrate.

It belongs to the herpesviridae thymidine kinase family. In terms of assembly, homodimer.

The catalysed reaction is thymidine + ATP = dTMP + ADP + H(+). Functionally, catalyzes the transfer of the gamma-phospho group of ATP to thymidine to generate dTMP in the salvage pathway of pyrimidine synthesis. The dTMP serves as a substrate for DNA polymerase during viral DNA replication. Allows the virus to be reactivated and to grow in non-proliferative cells lacking a high concentration of phosphorylated nucleic acid precursors. In Alcelaphine herpesvirus 1 (strain WC11) (AlHV-1), this protein is Thymidine kinase.